Consider the following 567-residue polypeptide: Fanconi anemia group C protein homolog (567 aa).

Belongs to the multisubunit FA complex composed of FANCA, FANCB, FANCC, FANCE, FANCF, FANCG, FANCL/PHF9 and FANCM. This complex may also include HSP70. Interacts with ZBTB32. Upon IFNG induction, interacts with STAT1. Interacts with CDK1. Interacts with EIF2AK2.

The protein localises to the nucleus. It is found in the cytoplasm. DNA repair protein that may operate in a postreplication repair or a cell cycle checkpoint function. May be implicated in interstrand DNA cross-link repair and in the maintenance of normal chromosome stability. Upon IFNG induction, may facilitate STAT1 activation by recruiting STAT1 to IFNGR1. The chain is Fanconi anemia group C protein homolog (FANCC) from Bos taurus (Bovine).